We begin with the raw amino-acid sequence, 708 residues long: Lactotransferrin (708 aa).

A signal peptide spans 1–19 (MKLFVPALLSLGALGLCLA). Transferrin-like domains follow at residues 25-352 (VRWC…NLRE) and 364-693 (VVWC…NLKK). 2 disulfides stabilise this stretch: cysteine 28–cysteine 64 and cysteine 38–cysteine 55. Aspartate 79 contributes to the Fe cation binding site. Residue lysine 92 is part of the active site. Residue tyrosine 111 coordinates Fe cation. Cystine bridges form between cysteine 134–cysteine 217, cysteine 176–cysteine 192, cysteine 179–cysteine 202, cysteine 189–cysteine 200, and cysteine 250–cysteine 264. Threonine 136, arginine 140, alanine 142, and glycine 143 together coordinate hydrogencarbonate. Tyrosine 211 is a binding site for Fe cation. Residue asparagine 252 is glycosylated (N-linked (GlcNAc...) (high mannose) asparagine). Histidine 272 contacts Fe cation. The Nucleophile role is filled by serine 278. Residue asparagine 300 is glycosylated (N-linked (GlcNAc...) (hybrid) asparagine). 2 cysteine pairs are disulfide-bonded: cysteine 367/cysteine 399 and cysteine 377/cysteine 390. Fe cation contacts are provided by aspartate 414 and tyrosine 452. Cystine bridges form between cysteine 424–cysteine 703, cysteine 444–cysteine 666, cysteine 476–cysteine 551, cysteine 500–cysteine 694, cysteine 510–cysteine 524, cysteine 521–cysteine 534, cysteine 592–cysteine 606, and cysteine 644–cysteine 649. 4 residues coordinate hydrogencarbonate: threonine 478, arginine 482, alanine 484, and glycine 485. Asparagine 495 carries N-linked (GlcNAc...) (complex) asparagine; alternate glycosylation. N-linked (GlcNAc...) (high mannose) asparagine; alternate glycosylation is present at asparagine 495. Asparagine 495 carries an N-linked (GlcNAc...) (hybrid) asparagine; alternate glycan. Tyrosine 545 serves as a coordination point for Fe cation. N-linked (GlcNAc...) (high mannose) asparagine glycosylation occurs at asparagine 564. Residue histidine 614 participates in Fe cation binding.

Belongs to the transferrin family. As to quaternary structure, monomer. Found in a complex with LTF, CLU, EPPIN and SEMG1. Found in a complex with MPO and LTF; interacts directly with CP, allows Fe(3+) incorporation into LTF and activation of CP ferroxidase activity. Post-translationally, poly-N-acetyllactosaminic carbohydrate moiety seems to be needed for TLR4 activation.

It is found in the secreted. It localises to the cytoplasmic granule. Its function is as follows. Transferrins are iron binding transport proteins which can bind two Fe(3+) ions in association with the binding of an anion, usually bicarbonate. Major iron-binding and multifunctional protein found in exocrine fluids such as breast milk and mucosal secretions. Has antimicrobial activity, which depends on the extracellular cation concentration. Antimicrobial properties include bacteriostasis, which is related to its ability to sequester free iron and thus inhibit microbial growth, as well as direct bactericidal properties leading to the release of lipopolysaccharides from the bacterial outer membrane. Can also prevent bacterial biofilm development in P.aeruginosa infection. Has weak antifungal activity against C.albicans. Has anabolic, differentiating and anti-apoptotic effects on osteoblasts and can also inhibit osteoclastogenesis, possibly playing a role in the regulation of bone growth. Promotes binding of species C adenoviruses to epithelial cells, promoting adenovirus infection. Can inhibit papillomavirus infections. Stimulates the TLR4 signaling pathway leading to NF-kappa-B activation and subsequent pro-inflammatory cytokine production while also interfering with the lipopolysaccharide (LPS)-stimulated TLR4 signaling. Inhibits neutrophil granulocyte migration to sites of apoptosis, when secreted by apoptotic cells. Stimulates VEGFA-mediated endothelial cell migration and proliferation. Binds heparin, chondroitin sulfate and possibly other glycosaminoglycans (GAGs). Also binds specifically to pneumococcal surface protein A (PspA), the lipid A portion of bacterial lipopolysaccharide (LPS), lysozyme and DNA. Functionally, lactoferricin binds to the bacterial surface and is crucial for the bactericidal functions. Has some antiviral activity against papillomavirus infection. N-terminal region shows strong antifungal activity against C.albicans. Contains two BBXB heparin-binding consensus sequences that appear to form the predominate functional GAG-binding site. In terms of biological role, the lactotransferrin transferrin-like domain 1 functions as a serine protease of the peptidase S60 family that cuts arginine rich regions. This function contributes to the antimicrobial activity. Shows a preferential cleavage at -Arg-Ser-Arg-Arg-|- and -Arg-Arg-Ser-Arg-|-, and of Z-Phe-Arg-|-aminomethylcoumarin sites. This is Lactotransferrin (LTF) from Bubalus bubalis (Domestic water buffalo).